The chain runs to 149 residues: MIIGYFDGLCEPKNPGGIATFGFVIYLDNRKIEGYGLAEKPFSINSTNNVAEYSGLICLMETMLRLGISSPIIKGDSQLVIKQMNGEYKVKAKRIIPLYEKAIELKKKLNATLIWVPREENKEADRLSRVAYELVRRGKLRDIGCIILT.

One can recognise an RNase H type-1 domain in the interval 1–140 (MIIGYFDGLC…AYELVRRGKL (140 aa)). Mg(2+) contacts are provided by Asp-7, Glu-52, Asp-76, and Asp-125. Asp-7, Glu-52, Asp-76, and Asp-125 together coordinate Mn(2+). An intrachain disulfide couples Cys-58 to Cys-145.

As to quaternary structure, monomer. Requires Mn(2+) as cofactor. It depends on Mg(2+) as a cofactor. The cofactor is Co(2+). Ni(2+) serves as cofactor. Post-translationally, the disulfide bond confers considerable stability to the protein.

The protein localises to the cytoplasm. The catalysed reaction is Endonucleolytic cleavage to 5'-phosphomonoester.. Functionally, nuclease that specifically degrades the RNA of RNA-DNA hybrids. Endonucleolytically removes RNA primers from the Okazaki fragments of lagging strand synthesis on its own. In the presence of Mn(2+) or Co(2+) can also cleave an RNA-RNA hybrid; the dsRNase activity is 10- 100-fold lower than RNase H activity. Complements the temperature-sensitive phenotype of an E.coli double rnhA/rnhB (RNase H) disruption mutant. The sequence is that of Ribonuclease HI (rnhA) from Sulfurisphaera tokodaii (strain DSM 16993 / JCM 10545 / NBRC 100140 / 7) (Sulfolobus tokodaii).